The following is a 272-amino-acid chain: MSRIDATLSALKSEKKTALIPYITAGDPHPDMTVNLMHSLVEQGADMIELGVPFSDPMADGPVIQKAVERALEHNVSLKNVLAYVTEFRKKDAQTPVILMGYLNPIEAMGSDVFAKAAAEAGVDAVLTVDMPPEESEGYFQDLSLAQLDRIFLVSPTTPDGRLNAVSEKGSGFVYYVSLKGVTGSKALDVDDVAQHVGHLREKMSMPVAIGFGIRDGNTAYEMAKLGDAIIVGSALVSLIEQNASEDSAVIQQVLSDKMREFRQAIDKADNE.

Active-site proton acceptor residues include E49 and D60.

Belongs to the TrpA family. Tetramer of two alpha and two beta chains.

It carries out the reaction (1S,2R)-1-C-(indol-3-yl)glycerol 3-phosphate + L-serine = D-glyceraldehyde 3-phosphate + L-tryptophan + H2O. The protein operates within amino-acid biosynthesis; L-tryptophan biosynthesis; L-tryptophan from chorismate: step 5/5. In terms of biological role, the alpha subunit is responsible for the aldol cleavage of indoleglycerol phosphate to indole and glyceraldehyde 3-phosphate. This is Tryptophan synthase alpha chain from Hydrogenovibrio crunogenus (strain DSM 25203 / XCL-2) (Thiomicrospira crunogena).